A 495-amino-acid polypeptide reads, in one-letter code: MIHFADLGAISLANSNTVIAGCIVFALYYLFQFLNSKKLNFDAPVIGDASDLRSALINGYNQCPNTPFLLPTAAHPTIILPIKYIDEIKSLPPDKISFLEEFRDRYFGHYTAFANNTEGDAVTTSVKVDLTQSIARALENMQAETELAFATELPKPKDWMSVTLYPIILRMVAKVSGRVMVGEPLCRNEKWIQISTTYTRDTFLGGRAVWARHPLFRPIYALYSPELKKVRQHYTDAAEFLRPIFNQRFKEMERDDFEKPQDMIQWMIDNSGNNAKDATFQGRCQLLISFAALHTTSGLLGNAMLDLAARPKYIEALREEIAANLPENTQITKQILTKLRKMDSFLKESQRMNPLNLVTMNRKMMDTVQLSDGTILPKGSFLGMAAGSIGFDPRIFENPDEFDGFRFEKLRQQEGAENKFQLVTTGKDSLAFGHGTHSCPGRFFASNEIKTMLIELLRNYDFQLLPGTERPKNLKSDMSLVVDPTAQIQIKERCR.

A helical membrane pass occupies residues 12 to 31 (LANSNTVIAGCIVFALYYLF). A glycan (N-linked (GlcNAc...) asparagine) is linked at asparagine 115. Cysteine 439 contributes to the heme binding site.

The protein belongs to the cytochrome P450 family. Heme serves as cofactor.

Its subcellular location is the membrane. The protein operates within polyketide biosynthesis. Its function is as follows. Cytochrome P450 monooxygenase; part of the gene cluster A that mediates the biosynthesis of botcinic acid and its botcinin derivatives, acetate-derived polyketides that contribute to virulence when combined with the sesquiterpene botrydial. Botcinic acid and its derivatives have been shown to induce chlorosis and necrosis during host plant infection, but also have antifungal activities. Two polyketide synthases, BOA6 and BOA9, are involved in the biosynthesis of botcinins. BOA6 mediates the formation of the per-methylated tetraketide core by condensation of four units of malonyl-CoA with one unit of acetyl-CoA, which would be methylated in activated methylene groups to yield a bicyclic acid intermediate that could then either be converted to botrylactone derivatives or lose the starter acetate unit through a retro-Claisen type C-C bond cleavage to yield botcinin derivatives. The second polyketide synthase, BOA9, is probably required for the biosynthesis of the tetraketide side chain of botcinins. The methyltransferase (MT) domain within BOA6 is probably responsible for the incorporation of four methyl groups. The trans-enoyl reductase BOA5 might take over the enoyl reductase function of BOA6 that misses an ER domain. The monooxygenases BOA2, BOA3 and BOA4 might be involved in further hydroxylations at C4, C5 and C8, whereas BOA7, close to BOA9, could potentially be involved in the hydroxylation at C4 in the side chain of botcinins. This Botryotinia fuckeliana (strain B05.10) (Noble rot fungus) protein is Cytochrome P450 monooxygenase BOA4.